Here is a 331-residue protein sequence, read N- to C-terminus: Biotin synthase (331 aa).

Positions 43–267 constitute a Radical SAM core domain; it reads NTVQVSTLLS…LMPASYVRLS (225 aa). [4Fe-4S] cluster contacts are provided by Cys-58, Cys-62, and Cys-65. Positions 102, 133, 193, and 265 each coordinate [2Fe-2S] cluster.

The protein belongs to the radical SAM superfamily. Biotin synthase family. As to quaternary structure, homodimer. [4Fe-4S] cluster serves as cofactor. It depends on [2Fe-2S] cluster as a cofactor.

The enzyme catalyses (4R,5S)-dethiobiotin + (sulfur carrier)-SH + 2 reduced [2Fe-2S]-[ferredoxin] + 2 S-adenosyl-L-methionine = (sulfur carrier)-H + biotin + 2 5'-deoxyadenosine + 2 L-methionine + 2 oxidized [2Fe-2S]-[ferredoxin]. It functions in the pathway cofactor biosynthesis; biotin biosynthesis; biotin from 7,8-diaminononanoate: step 2/2. Its function is as follows. Catalyzes the conversion of dethiobiotin (DTB) to biotin by the insertion of a sulfur atom into dethiobiotin via a radical-based mechanism. The polypeptide is Biotin synthase (Alkalilimnicola ehrlichii (strain ATCC BAA-1101 / DSM 17681 / MLHE-1)).